A 156-amino-acid polypeptide reads, in one-letter code: Small ribosomal subunit protein uS7 (156 aa).

This sequence belongs to the universal ribosomal protein uS7 family. As to quaternary structure, part of the 30S ribosomal subunit. Contacts proteins S9 and S11.

Functionally, one of the primary rRNA binding proteins, it binds directly to 16S rRNA where it nucleates assembly of the head domain of the 30S subunit. Is located at the subunit interface close to the decoding center, probably blocks exit of the E-site tRNA. In Clostridium tetani (strain Massachusetts / E88), this protein is Small ribosomal subunit protein uS7.